A 155-amino-acid polypeptide reads, in one-letter code: Riboflavin kinase (155 aa).

The ATP site is built by Gly-15, Lys-21, Thr-27, and Asn-29. 2 residues coordinate Mg(2+): Thr-27 and Asn-29. Glu-79 functions as the Nucleophile in the catalytic mechanism. Residues Ile-82, His-84, and Tyr-91 each contribute to the ATP site. Residues Arg-104, Lys-107, and Phe-109 each coordinate FMN.

As to quaternary structure, monomer. Directly interacts with TNFRSF1A death domain; this interaction may be supported by TRADD. In the absence of TNFRSF1A, interacts with TRADD. Independently of TNFRSF1A, interacts with the NADPH oxidase subunit CYBA. Requires Zn(2+) as cofactor. The cofactor is Mg(2+).

It localises to the cytoplasm. It catalyses the reaction riboflavin + ATP = FMN + ADP + H(+). It functions in the pathway cofactor biosynthesis; FMN biosynthesis; FMN from riboflavin (ATP route): step 1/1. Functionally, catalyzes the phosphorylation of riboflavin (vitamin B2) to form flavin-mononucleotide (FMN), hence rate-limiting enzyme in the synthesis of FAD. Essential for TNF-induced reactive oxygen species (ROS) production. Through its interaction with both TNFRSF1A and CYBA, physically and functionally couples TNFRSF1A to NADPH oxidase. TNF-activation of RFK may enhance the incorporation of FAD in NADPH oxidase, a critical step for the assembly and activation of NADPH oxidase. In Mus musculus (Mouse), this protein is Riboflavin kinase (Rfk).